The sequence spans 957 residues: Glycine dehydrogenase (decarboxylating) (957 aa).

Lys-708 is modified (N6-(pyridoxal phosphate)lysine).

Belongs to the GcvP family. As to quaternary structure, the glycine cleavage system is composed of four proteins: P, T, L and H. Requires pyridoxal 5'-phosphate as cofactor.

The enzyme catalyses N(6)-[(R)-lipoyl]-L-lysyl-[glycine-cleavage complex H protein] + glycine + H(+) = N(6)-[(R)-S(8)-aminomethyldihydrolipoyl]-L-lysyl-[glycine-cleavage complex H protein] + CO2. The glycine cleavage system catalyzes the degradation of glycine. The P protein binds the alpha-amino group of glycine through its pyridoxal phosphate cofactor; CO(2) is released and the remaining methylamine moiety is then transferred to the lipoamide cofactor of the H protein. The polypeptide is Glycine dehydrogenase (decarboxylating) (Klebsiella pneumoniae subsp. pneumoniae (strain ATCC 700721 / MGH 78578)).